Consider the following 156-residue polypeptide: MAKRKDNKTLAENRKARHDYFVDEAMEAGIALVGTEVKSIRNGRVNLKDCYADINNGEIFINNMHISPYEQGNIFNVDPLRKRKLLLHKSEIQRLIGIVQQQGVALIPLSLYLKNGRVKVNLGVCRGKKNYDKRDTMLEKAHKREMDRQLKERNRY.

This sequence belongs to the SmpB family.

The protein localises to the cytoplasm. Required for rescue of stalled ribosomes mediated by trans-translation. Binds to transfer-messenger RNA (tmRNA), required for stable association of tmRNA with ribosomes. tmRNA and SmpB together mimic tRNA shape, replacing the anticodon stem-loop with SmpB. tmRNA is encoded by the ssrA gene; the 2 termini fold to resemble tRNA(Ala) and it encodes a 'tag peptide', a short internal open reading frame. During trans-translation Ala-aminoacylated tmRNA acts like a tRNA, entering the A-site of stalled ribosomes, displacing the stalled mRNA. The ribosome then switches to translate the ORF on the tmRNA; the nascent peptide is terminated with the 'tag peptide' encoded by the tmRNA and targeted for degradation. The ribosome is freed to recommence translation, which seems to be the essential function of trans-translation. This is SsrA-binding protein from Clostridium perfringens (strain 13 / Type A).